The following is a 286-amino-acid chain: Aldo-keto reductase MAV_4483 (286 aa).

Tyr-61 acts as the Proton donor in catalysis. Positions 201, 203, 239, 241, 242, 247, and 251 each coordinate NADPH.

The protein belongs to the aldo/keto reductase family.

The sequence is that of Aldo-keto reductase MAV_4483 from Mycobacterium avium (strain 104).